The primary structure comprises 399 residues: Acetate kinase (399 aa).

Asn-10 provides a ligand contact to Mg(2+). Lys-17 contributes to the ATP binding site. A substrate-binding site is contributed by Arg-91. Asp-150 acts as the Proton donor/acceptor in catalysis. ATP contacts are provided by residues 210–214, 285–287, and 333–337; these read HLGNG, DFR, and GIGEN. A Mg(2+)-binding site is contributed by Glu-387.

The protein belongs to the acetokinase family. Homodimer. Mg(2+) serves as cofactor. Mn(2+) is required as a cofactor.

Its subcellular location is the cytoplasm. The catalysed reaction is acetate + ATP = acetyl phosphate + ADP. It participates in metabolic intermediate biosynthesis; acetyl-CoA biosynthesis; acetyl-CoA from acetate: step 1/2. Its function is as follows. Catalyzes the formation of acetyl phosphate from acetate and ATP. Can also catalyze the reverse reaction. The protein is Acetate kinase of Wigglesworthia glossinidia brevipalpis.